Consider the following 31-residue polypeptide: PTEN upstream open reading frame MP31 (31 aa).

In terms of assembly, interacts with lactate dehydrogenases LDHA and LDHB; interaction with mitochondrial LDH leads to inhibition of lactate dehydrogenase activity, preventing conversion of lactate to pyruvate. As to expression, expressed in brain (at protein level). Expressed at lower levels in glioblastomas than in normal brain tissue (at protein level).

The protein resides in the mitochondrion. Its function is as follows. Inhibits lactate dehydrogenase (LDH)-mediated conversion of lactate to pyruvate in mitochondria by competing with mitochondrial LDH for binding to NAD(+). Also inhibits cellular lactate utilization. In Homo sapiens (Human), this protein is PTEN upstream open reading frame MP31.